A 362-amino-acid chain; its full sequence is Dual-specificity RNA methyltransferase RlmN (362 aa).

Glu-91 functions as the Proton acceptor in the catalytic mechanism. Positions 97-333 (EDDRGTLCVS…VTTRKTRGED (237 aa)) constitute a Radical SAM core domain. Cys-104 and Cys-338 are disulfide-bonded. Residues Cys-111, Cys-115, and Cys-118 each coordinate [4Fe-4S] cluster. S-adenosyl-L-methionine is bound by residues 164–165 (GE), Ser-196, 218–220 (SLH), and Asn-295. Cys-338 functions as the S-methylcysteine intermediate in the catalytic mechanism.

It belongs to the radical SAM superfamily. RlmN family. Requires [4Fe-4S] cluster as cofactor.

The protein resides in the cytoplasm. It carries out the reaction adenosine(2503) in 23S rRNA + 2 reduced [2Fe-2S]-[ferredoxin] + 2 S-adenosyl-L-methionine = 2-methyladenosine(2503) in 23S rRNA + 5'-deoxyadenosine + L-methionine + 2 oxidized [2Fe-2S]-[ferredoxin] + S-adenosyl-L-homocysteine. The enzyme catalyses adenosine(37) in tRNA + 2 reduced [2Fe-2S]-[ferredoxin] + 2 S-adenosyl-L-methionine = 2-methyladenosine(37) in tRNA + 5'-deoxyadenosine + L-methionine + 2 oxidized [2Fe-2S]-[ferredoxin] + S-adenosyl-L-homocysteine. Functionally, specifically methylates position 2 of adenine 2503 in 23S rRNA and position 2 of adenine 37 in tRNAs. m2A2503 modification seems to play a crucial role in the proofreading step occurring at the peptidyl transferase center and thus would serve to optimize ribosomal fidelity. In Methylobacillus flagellatus (strain ATCC 51484 / DSM 6875 / VKM B-1610 / KT), this protein is Dual-specificity RNA methyltransferase RlmN.